A 298-amino-acid polypeptide reads, in one-letter code: Diphthine methyl ester synthase (298 aa).

S-adenosyl-L-methionine is bound by residues leucine 9, aspartate 85, glycine 88, 113–114 (SV), leucine 164, leucine 222, and histidine 247.

It belongs to the diphthine synthase family.

The protein resides in the cytoplasm. It carries out the reaction 2-[(3S)-amino-3-carboxypropyl]-L-histidyl-[translation elongation factor 2] + 4 S-adenosyl-L-methionine = diphthine methyl ester-[translation elongation factor 2] + 4 S-adenosyl-L-homocysteine + 3 H(+). It functions in the pathway protein modification; peptidyl-diphthamide biosynthesis. Functionally, S-adenosyl-L-methionine-dependent methyltransferase that catalyzes four methylations of the modified target histidine residue in translation elongation factor 2 (EF-2), to form an intermediate called diphthine methyl ester. The four successive methylation reactions represent the second step of diphthamide biosynthesis. The sequence is that of Diphthine methyl ester synthase (DPH5) from Kluyveromyces lactis (strain ATCC 8585 / CBS 2359 / DSM 70799 / NBRC 1267 / NRRL Y-1140 / WM37) (Yeast).